Consider the following 229-residue polypeptide: Large ribosomal subunit protein uL1 (229 aa).

This sequence belongs to the universal ribosomal protein uL1 family. As to quaternary structure, part of the 50S ribosomal subunit.

Functionally, binds directly to 23S rRNA. The L1 stalk is quite mobile in the ribosome, and is involved in E site tRNA release. Protein L1 is also a translational repressor protein, it controls the translation of the L11 operon by binding to its mRNA. The polypeptide is Large ribosomal subunit protein uL1 (Histophilus somni (strain 2336) (Haemophilus somnus)).